We begin with the raw amino-acid sequence, 185 residues long: Protein LURP-one-related 13 (185 aa).

The protein belongs to the LOR family.

In terms of biological role, might be related to the phospholipid scramblase and tubby-like superfamily of membrane tethered transcription factors. This chain is Protein LURP-one-related 13, found in Arabidopsis thaliana (Mouse-ear cress).